Reading from the N-terminus, the 158-residue chain is NAD(P)H-quinone oxidoreductase subunit J, chloroplastic (158 aa).

The protein belongs to the complex I 30 kDa subunit family. As to quaternary structure, NDH is composed of at least 16 different subunits, 5 of which are encoded in the nucleus.

The protein localises to the plastid. Its subcellular location is the chloroplast thylakoid membrane. The catalysed reaction is a plastoquinone + NADH + (n+1) H(+)(in) = a plastoquinol + NAD(+) + n H(+)(out). It carries out the reaction a plastoquinone + NADPH + (n+1) H(+)(in) = a plastoquinol + NADP(+) + n H(+)(out). NDH shuttles electrons from NAD(P)H:plastoquinone, via FMN and iron-sulfur (Fe-S) centers, to quinones in the photosynthetic chain and possibly in a chloroplast respiratory chain. The immediate electron acceptor for the enzyme in this species is believed to be plastoquinone. Couples the redox reaction to proton translocation, and thus conserves the redox energy in a proton gradient. This Aethionema cordifolium (Lebanon stonecress) protein is NAD(P)H-quinone oxidoreductase subunit J, chloroplastic.